The chain runs to 503 residues: Probable cytosol aminopeptidase (503 aa).

Mn(2+) is bound by residues Lys-274 and Asp-279. Lys-286 is an active-site residue. Residues Asp-297, Asp-356, and Glu-358 each contribute to the Mn(2+) site. Residue Arg-360 is part of the active site.

The protein belongs to the peptidase M17 family. Mn(2+) is required as a cofactor.

Its subcellular location is the cytoplasm. It carries out the reaction Release of an N-terminal amino acid, Xaa-|-Yaa-, in which Xaa is preferably Leu, but may be other amino acids including Pro although not Arg or Lys, and Yaa may be Pro. Amino acid amides and methyl esters are also readily hydrolyzed, but rates on arylamides are exceedingly low.. The enzyme catalyses Release of an N-terminal amino acid, preferentially leucine, but not glutamic or aspartic acids.. Presumably involved in the processing and regular turnover of intracellular proteins. Catalyzes the removal of unsubstituted N-terminal amino acids from various peptides. The protein is Probable cytosol aminopeptidase of Burkholderia cenocepacia (strain ATCC BAA-245 / DSM 16553 / LMG 16656 / NCTC 13227 / J2315 / CF5610) (Burkholderia cepacia (strain J2315)).